Consider the following 249-residue polypeptide: Homeobox protein TGIF2LX (249 aa).

Disordered regions lie at residues 1-62 (MEAA…KRKG) and 126-192 (DPIV…KLTV). Over residues 9-27 (AETRSRVEKDSRRAKKDSP) the composition is skewed to basic and acidic residues. A compositionally biased stretch (polar residues) spans 28–46 (AKTQSPAQDTSIMLRNNAD). The homeobox; TALE-type DNA-binding region spans 55–118 (EHKKKRKGYL…INARRRILPD (64 aa)). Residues 159-172 (DNVQSLPLRSSPKG) show a composition bias toward polar residues.

This sequence belongs to the TALE/TGIF homeobox family.

The protein resides in the nucleus. In terms of biological role, may have a transcription role in testis. In Macaca fascicularis (Crab-eating macaque), this protein is Homeobox protein TGIF2LX (TGIF2LX).